The following is a 331-amino-acid chain: Tryptophan--tRNA ligase (331 aa).

Residues 10–12 (QPS) and 18–19 (GN) contribute to the ATP site. Residues 11 to 19 (PSGQLTLGN) carry the 'HIGH' region motif. D133 is a binding site for L-tryptophan. ATP is bound by residues 145–147 (GED), V184, and 193–197 (KMSKS). A 'KMSKS' region motif is present at residues 193 to 197 (KMSKS).

Belongs to the class-I aminoacyl-tRNA synthetase family. As to quaternary structure, homodimer.

The protein localises to the cytoplasm. It carries out the reaction tRNA(Trp) + L-tryptophan + ATP = L-tryptophyl-tRNA(Trp) + AMP + diphosphate + H(+). Functionally, catalyzes the attachment of tryptophan to tRNA(Trp). The protein is Tryptophan--tRNA ligase of Listeria monocytogenes serovar 1/2a (strain ATCC BAA-679 / EGD-e).